The sequence spans 1178 residues: DNA-directed RNA polymerase subunit beta (1178 aa).

Positions 1–37 (MLEGCILPDFGQSKTDVSPSQSRPQSSPNNSVPGAPN) are disordered. A compositionally biased stretch (low complexity) spans 17 to 33 (VSPSQSRPQSSPNNSVP).

Belongs to the RNA polymerase beta chain family. In terms of assembly, the RNAP catalytic core consists of 2 alpha, 1 beta, 1 beta' and 1 omega subunit. When a sigma factor is associated with the core the holoenzyme is formed, which can initiate transcription.

The enzyme catalyses RNA(n) + a ribonucleoside 5'-triphosphate = RNA(n+1) + diphosphate. Functionally, DNA-dependent RNA polymerase catalyzes the transcription of DNA into RNA using the four ribonucleoside triphosphates as substrates. This is DNA-directed RNA polymerase subunit beta from Mycobacterium leprae (strain Br4923).